The following is a 575-amino-acid chain: G2/mitotic-specific cyclin-B3 (575 aa).

A D-box motif is present at residues 75 to 83; it reads RSALGNLTN. At S215 the chain carries Phosphoserine.

It belongs to the cyclin family. Cyclin AB subfamily. As to quaternary structure, interacts with Cdk1 kinase. Ubiquitinated. Ubiquitination leads to its degradation in early anaphase. In embryo, it is expressed in all mitotically proliferating cells, with a high level in neuroblasts. Not expressed in old embryos and thereafter. Not expressed in endoreplicating tissues.

It is found in the nucleus. Cyclins are positive regulatory subunits of the cyclin-dependent kinases (CDKs), and thereby play an essential role in the control of the cell cycle, notably via their destruction during cell division. Probably functions redundantly with other cyclins in regulation of cell cycle. Its presence may be required to delay a deadline for completing cytokinesis that is ordinary imposed by nuclear envelope reformation. Degradation of CycB and CycB3 promote cytokinesis furrow initiation and ingression. Required with CycB for female fertility. The sequence is that of G2/mitotic-specific cyclin-B3 (CycB3) from Drosophila melanogaster (Fruit fly).